A 1442-amino-acid chain; its full sequence is Chitin synthase regulator SKT5 (1442 aa).

Disordered stretches follow at residues Met-1–Leu-54 and Leu-72–Gln-117. Over residues Asn-12–His-25 the composition is skewed to basic and acidic residues. The span at Lys-39 to Thr-53 shows a compositional bias: polar residues. Residues Lys-75–Ser-99 are compositionally biased toward basic and acidic residues. 7 Sel1-like repeats span residues Val-198 to His-236, Pro-237 to His-272, Pro-273 to Thr-309, Pro-313 to Tyr-350, Ala-351 to His-387, Lys-388 to Leu-425, and Ala-426 to Asp-461. The tract at residues Glu-550–Lys-1402 is disordered. The segment covering Pro-605–Glu-617 has biased composition (pro residues). Residues Phe-633–Lys-648 are compositionally biased toward basic residues. Residues Gly-747–Pro-758 show a composition bias toward low complexity. Composition is skewed to basic and acidic residues over residues Gly-762 to Lys-804, Gly-821 to Asp-840, and Arg-859 to Glu-875. Residues Ser-876 to Pro-891 are compositionally biased toward low complexity. Composition is skewed to pro residues over residues Pro-964–Ala-977, Arg-1139–Pro-1158, and Ala-1200–Pro-1220. Positions Pro-1232–Gly-1243 are enriched in polar residues. Residues Pro-1271 to Phe-1282 show a composition bias toward pro residues. A compositionally biased stretch (low complexity) spans Arg-1295–Ser-1305. Pro residues-rich tracts occupy residues Met-1306 to Pro-1322 and Asp-1371 to Thr-1386. Over residues Gly-1392–Lys-1402 the composition is skewed to polar residues.

Belongs to the SKT5 family.

The protein resides in the cell membrane. In terms of biological role, activator of the chitin synthase CHS3 which polymerizes chitin, a structural polymer of the fungal cell wall. The sequence is that of Chitin synthase regulator SKT5 from Malassezia restricta (strain ATCC 96810 / NBRC 103918 / CBS 7877) (Seborrheic dermatitis infection agent).